A 356-amino-acid chain; its full sequence is Protein-arginine kinase (356 aa).

Residues 22–249 (FRPISTLSLS…SKILSAETEA (228 aa)) enclose the Phosphagen kinase C-terminal domain. Residues 25–29 (ISTLS), 172–176 (VARAF), and 202–207 (SSLLPL) each bind ATP.

The protein belongs to the ATP:guanido phosphotransferase family.

The enzyme catalyses L-arginyl-[protein] + ATP = N(omega)-phospho-L-arginyl-[protein] + ADP + H(+). In terms of biological role, catalyzes the specific phosphorylation of arginine residues in proteins. The chain is Protein-arginine kinase from Chlamydia muridarum (strain MoPn / Nigg).